Here is a 199-residue protein sequence, read N- to C-terminus: dITP/XTP pyrophosphatase (199 aa).

S8–K13 is a substrate binding site. The active-site Proton acceptor is D69. Mg(2+) is bound at residue D69. Substrate contacts are provided by residues S70, F154 to N157, K177, and H182 to R183.

Belongs to the HAM1 NTPase family. As to quaternary structure, homodimer. Requires Mg(2+) as cofactor.

The catalysed reaction is XTP + H2O = XMP + diphosphate + H(+). It carries out the reaction dITP + H2O = dIMP + diphosphate + H(+). The enzyme catalyses ITP + H2O = IMP + diphosphate + H(+). Functionally, pyrophosphatase that catalyzes the hydrolysis of nucleoside triphosphates to their monophosphate derivatives, with a high preference for the non-canonical purine nucleotides XTP (xanthosine triphosphate), dITP (deoxyinosine triphosphate) and ITP. Seems to function as a house-cleaning enzyme that removes non-canonical purine nucleotides from the nucleotide pool, thus preventing their incorporation into DNA/RNA and avoiding chromosomal lesions. The sequence is that of dITP/XTP pyrophosphatase from Xylella fastidiosa (strain 9a5c).